The chain runs to 395 residues: Phosphoglycerate kinase (395 aa).

Residues aspartate 21–asparagine 23, arginine 36, histidine 59–arginine 62, arginine 120, and arginine 153 each bind substrate. Residues lysine 203, glutamate 325, and glycine 351–serine 354 contribute to the ATP site.

It belongs to the phosphoglycerate kinase family. In terms of assembly, monomer.

It localises to the cytoplasm. The enzyme catalyses (2R)-3-phosphoglycerate + ATP = (2R)-3-phospho-glyceroyl phosphate + ADP. It participates in carbohydrate degradation; glycolysis; pyruvate from D-glyceraldehyde 3-phosphate: step 2/5. This Roseiflexus castenholzii (strain DSM 13941 / HLO8) protein is Phosphoglycerate kinase.